The following is a 440-amino-acid chain: Enolase 1 (440 aa).

2 residues coordinate substrate: H161 and E170. E213 acts as the Proton donor in catalysis. The Mg(2+) site is built by D248, E297, and D324. Substrate contacts are provided by E297 and D324. K349 functions as the Proton acceptor in the catalytic mechanism. Substrate-binding positions include 376 to 379 (SHRS) and K400.

Belongs to the enolase family. In terms of assembly, homodimer. It depends on Mg(2+) as a cofactor.

Its subcellular location is the cytoplasm. It carries out the reaction (2R)-2-phosphoglycerate = phosphoenolpyruvate + H2O. It participates in carbohydrate degradation; glycolysis; pyruvate from D-glyceraldehyde 3-phosphate: step 4/5. In Candida albicans (strain SC5314 / ATCC MYA-2876) (Yeast), this protein is Enolase 1 (ENO1).